Consider the following 298-residue polypeptide: uncharacterized protein (298 aa).

Residues 1 to 17 (MLTKSAENKRNRKDDSM) are compositionally biased toward basic and acidic residues. The disordered stretch occupies residues 1–22 (MLTKSAENKRNRKDDSMRPGQQ). An S1 motif domain is found at 167–227 (NKELTGTVYR…EDGSVNLSLL (61 aa)).

This is an uncharacterized protein from Bacillus subtilis (strain 168).